Reading from the N-terminus, the 89-residue chain is Large ribosomal subunit protein bL27 (89 aa).

A disordered region spans residues 1–26 (MATKKAGGSSKNGRDSAGRRLGLKKT).

The protein belongs to the bacterial ribosomal protein bL27 family.

The protein is Large ribosomal subunit protein bL27 of Orientia tsutsugamushi (strain Boryong) (Rickettsia tsutsugamushi).